We begin with the raw amino-acid sequence, 790 residues long: Protein sel-1 homolog 1 (790 aa).

The signal sequence occupies residues 1-21 (MQVRVRLSLLLLCAVLLGSAA). The disordered stretch occupies residues 22 to 51 (ATSDDKTNQDDSLDSKSSLPTDESVKDHTT). Residues 22–734 (ATSDDKTNQD…LFTQLDMDQL (713 aa)) lie on the Lumenal side of the membrane. An interaction with ERLEC1, OS9 and SYVN1 region spans residues 23–733 (TSDDKTNQDD…DLFTQLDMDQ (711 aa)). Ser-64 is subject to Phosphoserine. The segment covering 67 to 78 (AEVESLLQDEED) has biased composition (acidic residues). The interval 67-98 (AEVESLLQDEEDSSKTQEEEISFLESPNPSSK) is disordered. One can recognise a Fibronectin type-II domain in the interval 118–166 (AHGEPCHFPFLFLDKEYDECTSDGREDGRLWCATTYDYKTDEKWGFCET). Intrachain disulfides connect Cys-123-Cys-149 and Cys-137-Cys-164. Sel1-like repeat units lie at residues 179–214 (AEMI…GMNH), 215–250 (TKAL…EEGS), 251–286 (PKGQ…LGGN), 287–322 (LIAH…NHVA), 369–405 (VQAQ…NAGN), 406–442 (SHAM…DMGN), 443–478 (PVGQ…EQGW), 479–514 (VDGQ…QGGH), and 515–550 (ILAF…ERGR). 2 N-linked (GlcNAc...) asparagine glycosylation sites follow: Asn-191 and Asn-213. Asn-268 carries N-linked (GlcNAc...) asparagine glycosylation. An important for homodimerization and oligomerization region spans residues 348–533 (NSGMLEEDLI…MHASGTGVMR (186 aa)). N-linked (GlcNAc...) asparagine glycosylation occurs at Asn-427. An N-linked (GlcNAc...) asparagine glycan is attached at Asn-604. Sel1-like repeat units lie at residues 623–658 (TVAR…EQQH) and 660–695 (AQAM…EASP). Residues 639–719 (TDVDYETAFI…VVYFLQYIRE (81 aa)) are interaction with SYVN1. Residues 734–790 (LLGPEWDLYLMTIIALLLGTVIAYRQRQHQDIPVPRPPGPRPAPPQQEGPPEQQPPQ) form a mediates retention in the endoplasmic reticulum region. The helical transmembrane segment at 735 to 755 (LGPEWDLYLMTIIALLLGTVI) threads the bilayer. The Cytoplasmic segment spans residues 756 to 790 (AYRQRQHQDIPVPRPPGPRPAPPQQEGPPEQQPPQ). The interval 763–790 (QDIPVPRPPGPRPAPPQQEGPPEQQPPQ) is disordered. Pro residues predominate over residues 767-790 (VPRPPGPRPAPPQQEGPPEQQPPQ).

Belongs to the sel-1 family. In terms of assembly, homodimer and homooligomer. May form a complex with ERLEC1, HSPA5, OS9, and SYVN1. Interacts with FOXRED2 and EDEM1. Interacts with LPL and LMF1; may stabilize the complex formed by LPL and LMF1 and thereby promote the export of LPL dimers. Component of the HRD1 complex, which comprises at least SYNV1/HRD1, DERL1/2, FAM8A1, HERPUD1/HERP, OS9, SEL1L and UBE2J1. SYNV1 assembles with SEL1L and FAM8A1 through its transmembrane domains, but interaction with its cytoplasmic domain is required to confer stability to FAM8A1 and enhance recruitment of HERPUD1. The interaction with SYNV1/HRD1 is direct. N-glycosylated. Highly expressed in pancreas, white adipose tissue, liver and spleen (at protein level). Detected in heart, brain, spleen, lung, liver, kidney and testis.

The protein resides in the endoplasmic reticulum membrane. In terms of biological role, plays a role in the endoplasmic reticulum quality control (ERQC) system also called ER-associated degradation (ERAD) involved in ubiquitin-dependent degradation of misfolded endoplasmic reticulum proteins. Enhances SYVN1 stability. Plays a role in LPL maturation and secretion. Required for normal differentiation of the pancreas epithelium, and for normal exocrine function and survival of pancreatic cells. May play a role in Notch signaling. This Mus musculus (Mouse) protein is Protein sel-1 homolog 1 (Sel1l).